A 331-amino-acid chain; its full sequence is Laforin (331 aa).

Residues 1–124 (MRFRFGVVVP…NNLVDGVYCL (124 aa)) enclose the CBM20 domain. A Phosphoserine; by AMPK modification is found at Ser25. Substrate contacts are provided by residues Trp32, Lys87, 103–107 (GPHHD), Asp197, Asp235, and Arg241. Residues 156 to 323 (HYSRILPNIW…EEDFFQKFGK (168 aa)) form the Tyrosine-protein phosphatase domain. The active-site Phosphocysteine intermediate is the Cys266. The Glucan phosphatase signature motif CXAGXGR signature appears at 266–272 (CNAGVGR). Substrate is bound by residues 267-272 (NAGVGR) and Tyr304.

Belongs to the protein-tyrosine phosphatase family. As to quaternary structure, homodimer. Interacts with itself. Interacts with PPP1R3B, PPP1R3C, PPP1R3D, HIRIP5, and EPM2AIP1. Binds glycogen and Lafora bodies. Interacts with NHLRC1/malin (via the NHL repeats). Forms a complex with NHLRC1/malin and HSP70. Interacts with PPP1R3D; in the presence of NHLC1/malin the interaction leads to ubiquitination and autophagic degradation of PPP1R3D. Interacts (via the phosphatase domain) with MAPT/Tau; the interaction dephosphorylates MAPT. Interacts with PRDM8. Post-translationally, polyubiquitinated by NHLRC1/malin. In terms of processing, phosphorylation on Ser-25 by AMPK affects the phosphatase activity of the enzyme and its ability to homodimerize and interact with NHLRC1, PPP1R3C or PRKAA2.

The protein localises to the cytoplasm. Its subcellular location is the endoplasmic reticulum membrane. It localises to the cell membrane. It carries out the reaction O-phospho-L-tyrosyl-[protein] + H2O = L-tyrosyl-[protein] + phosphate. It catalyses the reaction O-phospho-L-seryl-[protein] + H2O = L-seryl-[protein] + phosphate. The enzyme catalyses O-phospho-L-threonyl-[protein] + H2O = L-threonyl-[protein] + phosphate. In terms of biological role, plays an important role in preventing glycogen hyperphosphorylation and the formation of insoluble aggregates, via its activity as glycogen phosphatase, and by promoting the ubiquitination of proteins involved in glycogen metabolism via its interaction with the E3 ubiquitin ligase NHLRC1/malin. Dephosphorylates phosphotyrosine and synthetic substrates, such as para-nitrophenylphosphate (pNPP), and has low activity with phosphoserine and phosphothreonine substrates (in vitro). Has also been shown to dephosphorylate MAPT. Shows strong phosphatase activity towards complex carbohydrates in vitro, avoiding glycogen hyperphosphorylation which is associated with reduced branching and formation of insoluble aggregates. Forms a complex with NHLRC1/malin and HSP70, which suppresses the cellular toxicity of misfolded proteins by promoting their degradation through the ubiquitin-proteasome system (UPS). Acts as a scaffold protein to facilitate PPP1R3C/PTG ubiquitination by NHLRC1/malin. Also promotes proteasome-independent protein degradation through the macroautophagy pathway. This Canis lupus familiaris (Dog) protein is Laforin (EPM2A).